Consider the following 463-residue polypeptide: Methionine aminopeptidase 2-1 (463 aa).

Residues 1–12 are compositionally biased toward basic and acidic residues; the sequence is MGSKTPDGHRQG. Residues 1 to 96 form a disordered region; it reads MGSKTPDGHR…SGQQTTPPRV (96 aa). The segment covering 41 to 53 has biased composition (acidic residues); the sequence is SGEDDEDGDDDEE. Polar residues predominate over residues 58–67; the sequence is DLNSRAQPNN. Residues 70-85 show a composition bias toward basic residues; sequence KKRKRKNNKKKKKKRP. Position 215 (histidine 215) interacts with substrate. The a divalent metal cation site is built by aspartate 236, aspartate 247, and histidine 316. Histidine 324 is a binding site for substrate. A divalent metal cation contacts are provided by glutamate 349 and glutamate 444.

This sequence belongs to the peptidase M24A family. Methionine aminopeptidase eukaryotic type 2 subfamily. The cofactor is Co(2+). Requires Zn(2+) as cofactor. Mn(2+) is required as a cofactor. Fe(2+) serves as cofactor.

The protein localises to the cytoplasm. The catalysed reaction is Release of N-terminal amino acids, preferentially methionine, from peptides and arylamides.. Functionally, cotranslationally removes the N-terminal methionine from nascent proteins. The N-terminal methionine is often cleaved when the second residue in the primary sequence is small and uncharged (Met-Ala-, Cys, Gly, Pro, Ser, Thr, or Val). This Arthroderma otae (strain ATCC MYA-4605 / CBS 113480) (Microsporum canis) protein is Methionine aminopeptidase 2-1.